Reading from the N-terminus, the 362-residue chain is Talin rod domain-containing protein 1 (362 aa).

The tract at residues 1 to 26 (MASGSAGKPTGEAASPAPASAIGGAS) is disordered. Alanine 2 carries the N-acetylalanine modification. The segment covering 13-26 (AASPAPASAIGGAS) has biased composition (low complexity).

May homodimerize. Interacts with F-actin.

In terms of biological role, actin-binding protein which may have an oncogenic function and regulates cell proliferation, migration and invasion in cancer cells. The sequence is that of Talin rod domain-containing protein 1 from Homo sapiens (Human).